Reading from the N-terminus, the 302-residue chain is Nudix hydrolase 22, chloroplastic (302 aa).

The N-terminal 25 residues, 1 to 25, are a transit peptide targeting the chloroplast; that stretch reads MKSGASAASPTAKSFNFGSSRLLAL. In terms of domain architecture, Nudix hydrolase spans 73 to 229; the sequence is PKKAAVLICL…DSDYVIWGLT (157 aa). Residues 114-135 carry the Nudix box motif; it reads KAEEHDKDDGITATREAEEEIG. Mg(2+) contacts are provided by E129 and E133.

The protein belongs to the Nudix hydrolase family. The cofactor is Mg(2+). Mn(2+) is required as a cofactor. As to expression, expressed in roots, leaves, stems and inflorescences.

It localises to the plastid. It is found in the chloroplast. Probably mediates the hydrolysis of some nucleoside diphosphate derivatives. The sequence is that of Nudix hydrolase 22, chloroplastic (NUDT22) from Arabidopsis thaliana (Mouse-ear cress).